An 801-amino-acid polypeptide reads, in one-letter code: U-box domain-containing protein 34 (801 aa).

Residues 205–309 are disordered; it reads RSPTLPDPRQ…PETSRKSKKV (105 aa). The span at 236–254 shows a compositional bias: polar residues; that stretch reads LTCNKPKTPQSSKASSATT. The span at 289 to 309 shows a compositional bias: basic and acidic residues; that stretch reads VSEHRDSDRSPPETSRKSKKV. Residues 301–395 adopt a coiled-coil conformation; sequence ETSRKSKKVE…ETAKALLARE (95 aa). Residues 442–705 form the Protein kinase domain; the sequence is FSPEKVIGEG…DLKSEVIPVL (264 aa). ATP contacts are provided by residues 448–456 and Lys469; that span reads IGEGGYGKV. Residue Asp564 is the Proton acceptor of the active site. One can recognise a U-box domain in the interval 724–797; sequence RAPSHYFCPI…RDWKSRVRFS (74 aa).

It belongs to the protein kinase superfamily. Ser/Thr protein kinase family.

The catalysed reaction is L-seryl-[protein] + ATP = O-phospho-L-seryl-[protein] + ADP + H(+). The enzyme catalyses L-threonyl-[protein] + ATP = O-phospho-L-threonyl-[protein] + ADP + H(+). It carries out the reaction S-ubiquitinyl-[E2 ubiquitin-conjugating enzyme]-L-cysteine + [acceptor protein]-L-lysine = [E2 ubiquitin-conjugating enzyme]-L-cysteine + N(6)-ubiquitinyl-[acceptor protein]-L-lysine.. Its pathway is protein modification; protein ubiquitination. Functions as an E3 ubiquitin ligase. The protein is U-box domain-containing protein 34 (PUB34) of Arabidopsis thaliana (Mouse-ear cress).